The following is a 352-amino-acid chain: Beta-hexosaminidase (352 aa).

Substrate is bound by residues aspartate 74, arginine 82, arginine 149, and 179–180; that span reads KH. Histidine 192 (proton donor/acceptor) is an active-site residue. Aspartate 263 acts as the Nucleophile in catalysis.

It belongs to the glycosyl hydrolase 3 family. NagZ subfamily.

The protein localises to the cytoplasm. It carries out the reaction Hydrolysis of terminal non-reducing N-acetyl-D-hexosamine residues in N-acetyl-beta-D-hexosaminides.. Its pathway is cell wall biogenesis; peptidoglycan recycling. Functionally, plays a role in peptidoglycan recycling by cleaving the terminal beta-1,4-linked N-acetylglucosamine (GlcNAc) from peptide-linked peptidoglycan fragments, giving rise to free GlcNAc, anhydro-N-acetylmuramic acid and anhydro-N-acetylmuramic acid-linked peptides. This is Beta-hexosaminidase from Bordetella pertussis (strain Tohama I / ATCC BAA-589 / NCTC 13251).